The sequence spans 156 residues: MRKSIIGIIVLHVVMALDQISKLYMSKLYAAHGDITVFEYCNLIQLWNKGISFGLFSTLENGNTVFMVLSAVIIAILSYTKIKTKSMSRSCCLSVIVGGALGNLMDRLRFGAVYDFIDLHIGDWHWPAFNLADLTITCGVIVFLAMELRKRSQLNA.

The helical transmembrane segment at 62 to 82 (GNTVFMVLSAVIIAILSYTKI) threads the bilayer. Active-site residues include Asp115 and Asp133. The helical transmembrane segment at 126–146 (WPAFNLADLTITCGVIVFLAM) threads the bilayer.

It belongs to the peptidase A8 family.

It localises to the cell inner membrane. It catalyses the reaction Release of signal peptides from bacterial membrane prolipoproteins. Hydrolyzes -Xaa-Yaa-Zaa-|-(S,diacylglyceryl)Cys-, in which Xaa is hydrophobic (preferably Leu), and Yaa (Ala or Ser) and Zaa (Gly or Ala) have small, neutral side chains.. Its pathway is protein modification; lipoprotein biosynthesis (signal peptide cleavage). Its function is as follows. This protein specifically catalyzes the removal of signal peptides from prolipoproteins. This is Lipoprotein signal peptidase from Anaplasma phagocytophilum (strain HZ).